We begin with the raw amino-acid sequence, 230 residues long: Protein CbbY (230 aa).

Catalysis depends on aspartate 8, which acts as the Nucleophile. Residues aspartate 8 and aspartate 10 each contribute to the Mg(2+) site. Substrate is bound at residue aspartate 8. Catalysis depends on aspartate 10, which acts as the Proton donor. Substrate contacts are provided by residues glutamate 17, 50–54 (GGKER), 75–78 (HRAK), and 115–121 (TTTSLPN). Aspartate 176 is a Mg(2+) binding site.

Belongs to the HAD-like hydrolase superfamily. CbbY/CbbZ/Gph/YieH family. Mg(2+) is required as a cofactor.

It catalyses the reaction D-xylulose 1,5-bisphosphate + H2O = D-xylulose 5-phosphate + phosphate. In terms of biological role, highly selective xylulose-1,5-bisphosphate (XuBP) phosphatase. Also shows activity towards ribulose-1,5-bisphosphate (RuBP) and fructose-1,6-bisphosphate (FBP), but not towards fructose-6-phosphate (F6P) or ribulose-5-phosphate (Ru5P). Degrades xylulose-1,5-bisphosphate, a potent inhibitor of rubisco produced by the rubisco itself. This Cereibacter sphaeroides (Rhodobacter sphaeroides) protein is Protein CbbY.